The sequence spans 419 residues: Serine hydroxymethyltransferase (419 aa).

(6S)-5,6,7,8-tetrahydrofolate contacts are provided by residues leucine 121 and 125-127 (GHL). N6-(pyridoxal phosphate)lysine is present on lysine 231.

This sequence belongs to the SHMT family. As to quaternary structure, homodimer. The cofactor is pyridoxal 5'-phosphate.

It is found in the cytoplasm. It catalyses the reaction (6R)-5,10-methylene-5,6,7,8-tetrahydrofolate + glycine + H2O = (6S)-5,6,7,8-tetrahydrofolate + L-serine. It functions in the pathway one-carbon metabolism; tetrahydrofolate interconversion. The protein operates within amino-acid biosynthesis; glycine biosynthesis; glycine from L-serine: step 1/1. Catalyzes the reversible interconversion of serine and glycine with tetrahydrofolate (THF) serving as the one-carbon carrier. This reaction serves as the major source of one-carbon groups required for the biosynthesis of purines, thymidylate, methionine, and other important biomolecules. Also exhibits THF-independent aldolase activity toward beta-hydroxyamino acids, producing glycine and aldehydes, via a retro-aldol mechanism. In Phytoplasma mali (strain AT), this protein is Serine hydroxymethyltransferase.